The following is a 483-amino-acid chain: MAYVIGIDIGTSALKTLVVNKSGDVVESYSVSYNTAHPKSGYSEIDPEIWYEATLESLKYILNHYTHNDLTGISFSGQMHGLVVIDQEGNPIRPAILWNDTRTSQEVEDIKKNLGLNSLLQLTQNTVLEGFTLPKLMWLKNHEQDNYKRIYKFMLPKDYIVYKLTGNVYTEPSDAAGTIMFSVKDENWSTELLHRLNIDPSICPEIIASHQKSGQLTEKVKNTLGIDSNINVYQGGANNACGALGSGITDEQKQLVSIGTSGVALSIENSTDYENDGNVHYFNHCVPNQKYIMGVTLSAGYSLEWLKQLISADENFTTFLKDINQSEVGANGLMYTPYLLGERTPHNDASVRGSFIGLDANTTQLDMKRAVIEGITYSINESIHIMKNNAININEIVSIGGGAKNNQWLQIQADIFNTTITTRTEEQGPAYGAAMIAAMGEQWFNTFNEMSEAWIAYHQKVYPIETNTKSYQDLFNIYKTIYD.

Position 79-80 (79-80 (MH)) interacts with substrate.

Belongs to the FGGY kinase family.

The catalysed reaction is D-xylulose + ATP = D-xylulose 5-phosphate + ADP + H(+). Functionally, catalyzes the phosphorylation of D-xylulose to D-xylulose 5-phosphate. The polypeptide is Xylulose kinase (Staphylococcus xylosus).